The sequence spans 483 residues: MKTLNRRDFPGAQYPERIIQFGEGNFLRAFVDWQIDLLNEHTDLNSGVVVVRPIETSFPPSLSTQDGLYTTIIRGLNEKGEAVSDARLIRSVNREISVYSEYDEFLKLAHNPEMRFVFSNTTEAGISYHAGDKFDDAPAVSYPAKLTRLLFERFSHFNGALDKGWIIIPCELIDYNGDALRELVLRYAQEWALPEAFIQWLDQANSFCSTLVDRIVTGYPRDEVAKLEEELGYHDGFLDTAEHFYLFVIQGPKSLATELRLDKYPLNVLIVDDIKPYKERKVAILNGAHTALVPVAFQAGLDTVGEAMNDAEICAFVEKAIYEEIIPVLDLPRDELESFASAVTGRFRNPYIKHQLLSIALNGMTKFRTRILPQLLAGQKAKGTLPARLTFALAALIAFYRGERNGETYPVQDDAHWLERYQQLWSQHRDRVIGTQELVAIVLAEKDHWEQDLTQVPGLVEQVANDLDAILEKGMREAVRPLC.

18–29 (IIQFGEGNFLRA) contacts NAD(+).

Belongs to the mannitol dehydrogenase family. UxaB subfamily.

It catalyses the reaction D-altronate + NAD(+) = keto-D-tagaturonate + NADH + H(+). Its pathway is carbohydrate metabolism; pentose and glucuronate interconversion. The polypeptide is Altronate oxidoreductase (Escherichia coli (strain 55989 / EAEC)).